Consider the following 57-residue polypeptide: Potassium channel toxin alpha-KTx 26.1 (57 aa).

A signal peptide spans 1-22 (MSRLFVFILIALFLSAIIDVMS). 3 disulfides stabilise this stretch: cysteine 30–cysteine 48, cysteine 34–cysteine 53, and cysteine 38–cysteine 55.

It belongs to the short scorpion toxin superfamily. Potassium channel inhibitor family. Alpha-KTx 26 subfamily. Expressed by the venom gland.

The protein resides in the secreted. Its function is as follows. Recombinant toxin that reversibly inhibits the potassium current of mKv1.3/KCNA3 channel stably expressed in COS7 cells (IC(50)=150 nM). Also shows a weak inhibition on Kv1.2/KCNA2, Kv1.3/KCNA3 and TRPV1 channels. This chain is Potassium channel toxin alpha-KTx 26.1, found in Olivierus martensii (Manchurian scorpion).